Here is a 307-residue protein sequence, read N- to C-terminus: Lipoyl synthase (307 aa).

Cys-55, Cys-60, Cys-66, Cys-81, Cys-85, Cys-88, and Ser-292 together coordinate [4Fe-4S] cluster. A Radical SAM core domain is found at 67 to 281 (WEDREATFLI…ARHAEELGFS (215 aa)).

This sequence belongs to the radical SAM superfamily. Lipoyl synthase family. The cofactor is [4Fe-4S] cluster.

It is found in the cytoplasm. It catalyses the reaction [[Fe-S] cluster scaffold protein carrying a second [4Fe-4S](2+) cluster] + N(6)-octanoyl-L-lysyl-[protein] + 2 oxidized [2Fe-2S]-[ferredoxin] + 2 S-adenosyl-L-methionine + 4 H(+) = [[Fe-S] cluster scaffold protein] + N(6)-[(R)-dihydrolipoyl]-L-lysyl-[protein] + 4 Fe(3+) + 2 hydrogen sulfide + 2 5'-deoxyadenosine + 2 L-methionine + 2 reduced [2Fe-2S]-[ferredoxin]. It participates in protein modification; protein lipoylation via endogenous pathway; protein N(6)-(lipoyl)lysine from octanoyl-[acyl-carrier-protein]: step 2/2. Functionally, catalyzes the radical-mediated insertion of two sulfur atoms into the C-6 and C-8 positions of the octanoyl moiety bound to the lipoyl domains of lipoate-dependent enzymes, thereby converting the octanoylated domains into lipoylated derivatives. The polypeptide is Lipoyl synthase (Mycolicibacterium paratuberculosis (strain ATCC BAA-968 / K-10) (Mycobacterium paratuberculosis)).